We begin with the raw amino-acid sequence, 262 residues long: Hemin import ATP-binding protein HmuV (262 aa).

The ABC transporter domain occupies 2 to 241 (IRASDISVRL…ETMEAVFGCR (240 aa)). 34-41 (GPNGSGKT) contacts ATP.

Belongs to the ABC transporter superfamily. Heme (hemin) importer (TC 3.A.1.14.5) family. The complex is composed of two ATP-binding proteins (HmuV), two transmembrane proteins (HmuU) and a solute-binding protein (HmuT).

The protein resides in the cell inner membrane. Functionally, part of the ABC transporter complex HmuTUV involved in hemin import. Responsible for energy coupling to the transport system. In Rhizobium meliloti (strain 1021) (Ensifer meliloti), this protein is Hemin import ATP-binding protein HmuV.